The sequence spans 78 residues: D-alanyl carrier protein (78 aa).

Positions 1 to 78 (MAFRENVLEI…MIITQLEALK (78 aa)) constitute a Carrier domain. Ser-36 carries the O-(pantetheine 4'-phosphoryl)serine modification.

The protein belongs to the DltC family. 4'-phosphopantetheine is transferred from CoA to a specific serine of apo-DCP.

The protein localises to the cytoplasm. It participates in cell wall biogenesis; lipoteichoic acid biosynthesis. Carrier protein involved in the D-alanylation of lipoteichoic acid (LTA). The loading of thioester-linked D-alanine onto DltC is catalyzed by D-alanine--D-alanyl carrier protein ligase DltA. The DltC-carried D-alanyl group is further transferred to cell membrane phosphatidylglycerol (PG) by forming an ester bond, probably catalyzed by DltD. D-alanylation of LTA plays an important role in modulating the properties of the cell wall in Gram-positive bacteria, influencing the net charge of the cell wall. The polypeptide is D-alanyl carrier protein (Listeria monocytogenes serotype 4b (strain CLIP80459)).